The chain runs to 286 residues: Protein FAM87A (286 aa).

A run of 2 helical transmembrane segments spans residues 68 to 88 (YLHS…ETAL) and 161 to 181 (SFFV…GDML).

This sequence belongs to the FAM87 family.

Its subcellular location is the membrane. This Homo sapiens (Human) protein is Protein FAM87A (FAM87A).